Reading from the N-terminus, the 726-residue chain is X-ray repair cross-complementing protein 5 (726 aa).

In terms of domain architecture, VWFA spans 8–160; sequence AVVLCMDVGL…ANLKKAEITL (153 aa). Residues 137–164 form a leucine-zipper region; sequence LSSPFSVDQLEVIIANLKKAEITLQFFL. A compositionally biased stretch (low complexity) spans 175-186; that stretch reads GSSNNRGNAGSS. The segment at 175–198 is disordered; it reads GSSNNRGNAGSSDRGCGPGKGLSD. One can recognise a Ku domain in the interval 253-449; that stretch reads GSSLSIRIVG…NKKFTPTESQ (197 aa). The short motif at 714–722 is the EEXXXDL motif element; sequence EDEGDVDDL.

This sequence belongs to the ku80 family. In terms of assembly, heterodimer composed of xrcc5/Ku80 and xrcc6/Ku70. In terms of processing, ubiquitinated via 'Lys-48'-linked polyubiquitination at DNA double strand break sites (DSBs), leading to its release from DSBs and subsequent proteasomal degradation. Polyubiquitination is not required for completion of NHEJ. In terms of tissue distribution, expressed at high levels in oocyte and testis.

Its subcellular location is the nucleus. Single-stranded DNA-dependent ATP-dependent helicase that plays a key role in DNA non-homologous end joining (NHEJ). This Xenopus laevis (African clawed frog) protein is X-ray repair cross-complementing protein 5.